Consider the following 268-residue polypeptide: Imidazole glycerol phosphate synthase subunit HisF (268 aa).

Active-site residues include D12 and D131.

Belongs to the HisA/HisF family. As to quaternary structure, heterodimer of HisH and HisF.

It localises to the cytoplasm. It carries out the reaction 5-[(5-phospho-1-deoxy-D-ribulos-1-ylimino)methylamino]-1-(5-phospho-beta-D-ribosyl)imidazole-4-carboxamide + L-glutamine = D-erythro-1-(imidazol-4-yl)glycerol 3-phosphate + 5-amino-1-(5-phospho-beta-D-ribosyl)imidazole-4-carboxamide + L-glutamate + H(+). It participates in amino-acid biosynthesis; L-histidine biosynthesis; L-histidine from 5-phospho-alpha-D-ribose 1-diphosphate: step 5/9. In terms of biological role, IGPS catalyzes the conversion of PRFAR and glutamine to IGP, AICAR and glutamate. The HisF subunit catalyzes the cyclization activity that produces IGP and AICAR from PRFAR using the ammonia provided by the HisH subunit. The polypeptide is Imidazole glycerol phosphate synthase subunit HisF (Methanocorpusculum labreanum (strain ATCC 43576 / DSM 4855 / Z)).